Here is a 317-residue protein sequence, read N- to C-terminus: Acetyl-coenzyme A carboxylase carboxyl transferase subunit alpha (317 aa).

The CoA carboxyltransferase C-terminal domain occupies 40-294; it reads RLQKKSEELT…KQQILADLQD (255 aa).

It belongs to the AccA family. Acetyl-CoA carboxylase is a heterohexamer composed of biotin carboxyl carrier protein (AccB), biotin carboxylase (AccC) and two subunits each of ACCase subunit alpha (AccA) and ACCase subunit beta (AccD).

Its subcellular location is the cytoplasm. It carries out the reaction N(6)-carboxybiotinyl-L-lysyl-[protein] + acetyl-CoA = N(6)-biotinyl-L-lysyl-[protein] + malonyl-CoA. The protein operates within lipid metabolism; malonyl-CoA biosynthesis; malonyl-CoA from acetyl-CoA: step 1/1. Its function is as follows. Component of the acetyl coenzyme A carboxylase (ACC) complex. First, biotin carboxylase catalyzes the carboxylation of biotin on its carrier protein (BCCP) and then the CO(2) group is transferred by the carboxyltransferase to acetyl-CoA to form malonyl-CoA. In Actinobacillus pleuropneumoniae serotype 5b (strain L20), this protein is Acetyl-coenzyme A carboxylase carboxyl transferase subunit alpha.